A 398-amino-acid polypeptide reads, in one-letter code: Odorant receptor 59b (398 aa).

The Cytoplasmic segment spans residues 1–46 (MAVFKLIKPAPLTEKVQSRQGNIYLYRAMWLIGWIPPKEGVLRYVY). Residues 47-67 (LFWTCVPFAFGVFYLPVGFII) form a helical membrane-spanning segment. Residues 68–84 (SYVQEFKNFTPGEFLTS) are Extracellular-facing. A helical transmembrane segment spans residues 85-105 (LQVCINVYGASVKSTITYLFL). The Cytoplasmic segment spans residues 106–141 (WRLRKTEILLDSLDKRLANDSDRERIHNMVARCNYA). A helical membrane pass occupies residues 142–162 (FLIYSFIYCGYAGSTFLSYAL). At 163 to 179 (SGRPPWSVYNPFIDWRD) the chain is on the extracellular side. Residues 180–200 (GMGSLWIQAIFEYITMSFAVL) form a helical membrane-spanning segment. The Cytoplasmic segment spans residues 201–269 (QDQLSDTYPL…DMIRPMISRT (69 aa)). A helical membrane pass occupies residues 270 to 290 (IFVQFALIGSVLGLTLVNVFF). Topologically, residues 291–293 (FSN) are extracellular. Residues 294–314 (FWKGVASLLFVITILLQTFPF) form a helical membrane-spanning segment. Topologically, residues 315–348 (CYTCNMLIDDAQDLSNEIFQSNWVDAEPRYKATL) are cytoplasmic. The chain crosses the membrane as a helical span at residues 349–369 (VLFMHHVQQPIIFIAGGIFPI). At 370 to 398 (SMNSNITVAKFAFSIITIVRQMNLAEQFQ) the chain is on the extracellular side. An N-linked (GlcNAc...) asparagine glycan is attached at N374.

The protein belongs to the insect chemoreceptor superfamily. Heteromeric odorant receptor channel (TC 1.A.69) family. Or2a subfamily. Interacts with Orco. Complexes exist early in the endomembrane system in olfactory sensory neurons (OSNs), coupling these complexes to the conserved ciliary trafficking pathway. Expressed in olfactory sensory neurons in the antenna.

It is found in the cell membrane. Functionally, odorant receptor which mediates acceptance or avoidance behavior, depending on its substrates. The odorant receptor repertoire encodes a large collection of odor stimuli that vary widely in identity, intensity, and duration. Forms a complex with Orco to form odorant-sensing units, providing sensitive and prolonged odorant signaling and calcium permeability. Also plays a role in the response to N,N-Diethyl-meta-toluamide (DEET), the most widely used insect repellent worldwide. This Drosophila melanogaster (Fruit fly) protein is Odorant receptor 59b (Or59b).